The chain runs to 276 residues: Probable ABC transporter permease protein NosY (276 aa).

Helical transmembrane passes span 20–40, 55–75, 111–131, 146–166, 179–199, and 251–271; these read WLLA…WLGA, IASL…LLAY, ILAL…ALLV, FMIS…VLSG, LGVW…LLVL, and VLWL…YAIF.

As to quaternary structure, the complex may be composed of an ATP-binding protein (NosF), a transmembrane protein (NosY) and a solute-binding protein (NosD).

The protein resides in the cell inner membrane. In terms of biological role, required for the assembly of the copper chromophores of nitrous oxide reductase. Could be part of the ABC transporter complex NosDFY. This is Probable ABC transporter permease protein NosY from Stutzerimonas stutzeri (Pseudomonas stutzeri).